Reading from the N-terminus, the 387-residue chain is Phosphoglycerate kinase (387 aa).

Residues 21 to 23, Arg36, 59 to 62, Arg113, and Arg146 contribute to the substrate site; these read DLN and HLGR. ATP is bound by residues Lys197, Glu314, and 340 to 343; that span reads GGDT.

The protein belongs to the phosphoglycerate kinase family. Monomer.

It is found in the cytoplasm. It carries out the reaction (2R)-3-phosphoglycerate + ATP = (2R)-3-phospho-glyceroyl phosphate + ADP. Its pathway is carbohydrate degradation; glycolysis; pyruvate from D-glyceraldehyde 3-phosphate: step 2/5. The sequence is that of Phosphoglycerate kinase from Photorhabdus laumondii subsp. laumondii (strain DSM 15139 / CIP 105565 / TT01) (Photorhabdus luminescens subsp. laumondii).